Consider the following 204-residue polypeptide: Small ribosomal subunit protein uS4 (204 aa).

The S4 RNA-binding domain maps to 93–156 (SRLSSVLYHS…AKIPVVVEAE (64 aa)).

Belongs to the universal ribosomal protein uS4 family. As to quaternary structure, part of the 30S ribosomal subunit. Contacts protein S5. The interaction surface between S4 and S5 is involved in control of translational fidelity.

In terms of biological role, one of the primary rRNA binding proteins, it binds directly to 16S rRNA where it nucleates assembly of the body of the 30S subunit. Functionally, with S5 and S12 plays an important role in translational accuracy. The sequence is that of Small ribosomal subunit protein uS4 from Wolbachia pipientis wMel.